Here is a 385-residue protein sequence, read N- to C-terminus: Proteinase-activated receptor 4 (385 aa).

The first 17 residues, 1 to 17 (MWGRLLLWPLVLGFSLS), serve as a signal peptide directing secretion. The propeptide at 18-47 (GGTQTPSVYDESGSTGGGDDSTPSILPAPR) is removed for receptor activation. The interval 21–42 (QTPSVYDESGSTGGGDDSTPSI) is disordered. At 48–82 (GYPGQVCANDSDTLELPDSSRALLLGWVPTRLVPA) the chain is on the extracellular side. Residue asparagine 56 is glycosylated (N-linked (GlcNAc...) asparagine). The helical transmembrane segment at 83–103 (LYGLVLVVGLPANGLALWVLA) threads the bilayer. Residues 104-108 (TQAPR) are Cytoplasmic-facing. The helical transmembrane segment at 109 to 129 (LPSTMLLMNLAAADLLLALAL) threads the bilayer. The Extracellular portion of the chain corresponds to 130-151 (PPRIAYHLRGQRWPFGEAACRL). Residues cysteine 149 and cysteine 228 are joined by a disulfide bond. Residues 152–172 (ATAALYGHMYGSVLLLAAVSL) form a helical membrane-spanning segment. Residues 173 to 192 (DRYLALVHPLRARALRGRRL) lie on the Cytoplasmic side of the membrane. The helical transmembrane segment at 193-213 (ALGLCMAAWLMAAALALPLTL) threads the bilayer. The Extracellular portion of the chain corresponds to 214-247 (QRQTFRLARSDRVLCHDALPLDAQASHWQPAFTC). The helical transmembrane segment at 248 to 268 (LALLGCFLPLLAMLLCYGATL) threads the bilayer. The Cytoplasmic portion of the chain corresponds to 269–283 (HTLAASGRRYGHALR). A helical transmembrane segment spans residues 284–304 (LTAVVLASAVAFFVPSNLLLL). Over 305–319 (LHYSDPSPSAWGNLY) the chain is Extracellular. The chain crosses the membrane as a helical span at residues 320–343 (GAYVPSLALSTLNSCVDPFIYYYV). At 344-385 (SAEFRDKVRAGLFQRSPGDTVASKASAEGGSRGMGTHSSLLQ) the chain is on the cytoplasmic side. A disordered region spans residues 362 to 385 (DTVASKASAEGGSRGMGTHSSLLQ).

The protein belongs to the G-protein coupled receptor 1 family. A proteolytic cleavage generates a new N-terminus that functions as a tethered ligand. As to expression, widely expressed, with highest levels in lung, pancreas, thyroid, testis and small intestine. Not expressed in brain, kidney, spinal cord and peripheral blood leukocytes. Also detected in platelets.

It localises to the cell membrane. Its activity is regulated as follows. Activated upon interaction by mucunain, a cowhage (Mucuna pruriens) plant cysteine proteinase. Its function is as follows. Receptor for activated thrombin or trypsin coupled to G proteins that stimulate phosphoinositide hydrolysis. May play a role in platelets activation. The chain is Proteinase-activated receptor 4 (F2RL3) from Homo sapiens (Human).